Reading from the N-terminus, the 198-residue chain is Pyridoxine/pyridoxamine 5'-phosphate oxidase (198 aa).

Residues 47-52 (RMVLVK), 62-63 (FT), Arg-68, Lys-69, and Gln-91 contribute to the FMN site. Lys-52 serves as a coordination point for substrate. Positions 109, 113, and 117 each coordinate substrate. FMN-binding positions include 126-127 (QS) and Trp-171. Residue 177–179 (RLH) coordinates substrate. Position 181 (Arg-181) interacts with FMN.

This sequence belongs to the pyridoxamine 5'-phosphate oxidase family. Homodimer. FMN is required as a cofactor.

It catalyses the reaction pyridoxamine 5'-phosphate + O2 + H2O = pyridoxal 5'-phosphate + H2O2 + NH4(+). It carries out the reaction pyridoxine 5'-phosphate + O2 = pyridoxal 5'-phosphate + H2O2. The protein operates within cofactor metabolism; pyridoxal 5'-phosphate salvage; pyridoxal 5'-phosphate from pyridoxamine 5'-phosphate: step 1/1. Its pathway is cofactor metabolism; pyridoxal 5'-phosphate salvage; pyridoxal 5'-phosphate from pyridoxine 5'-phosphate: step 1/1. Functionally, catalyzes the oxidation of either pyridoxine 5'-phosphate (PNP) or pyridoxamine 5'-phosphate (PMP) into pyridoxal 5'-phosphate (PLP). The polypeptide is Pyridoxine/pyridoxamine 5'-phosphate oxidase (Anaeromyxobacter dehalogenans (strain 2CP-C)).